The chain runs to 226 residues: 2-C-methyl-D-erythritol 4-phosphate cytidylyltransferase (226 aa).

This sequence belongs to the IspD/TarI cytidylyltransferase family. IspD subfamily.

It carries out the reaction 2-C-methyl-D-erythritol 4-phosphate + CTP + H(+) = 4-CDP-2-C-methyl-D-erythritol + diphosphate. It functions in the pathway isoprenoid biosynthesis; isopentenyl diphosphate biosynthesis via DXP pathway; isopentenyl diphosphate from 1-deoxy-D-xylulose 5-phosphate: step 2/6. Its function is as follows. Catalyzes the formation of 4-diphosphocytidyl-2-C-methyl-D-erythritol from CTP and 2-C-methyl-D-erythritol 4-phosphate (MEP). This chain is 2-C-methyl-D-erythritol 4-phosphate cytidylyltransferase, found in Bacillus mycoides (strain KBAB4) (Bacillus weihenstephanensis).